Reading from the N-terminus, the 378-residue chain is Succinyl-diaminopimelate desuccinylase (378 aa).

A Zn(2+)-binding site is contributed by H68. D70 is a catalytic residue. D101 is a Zn(2+) binding site. The active-site Proton acceptor is the E135. Zn(2+) contacts are provided by E136, E164, and H350.

It belongs to the peptidase M20A family. DapE subfamily. In terms of assembly, homodimer. Zn(2+) serves as cofactor. It depends on Co(2+) as a cofactor.

The catalysed reaction is N-succinyl-(2S,6S)-2,6-diaminopimelate + H2O = (2S,6S)-2,6-diaminopimelate + succinate. It participates in amino-acid biosynthesis; L-lysine biosynthesis via DAP pathway; LL-2,6-diaminopimelate from (S)-tetrahydrodipicolinate (succinylase route): step 3/3. Catalyzes the hydrolysis of N-succinyl-L,L-diaminopimelic acid (SDAP), forming succinate and LL-2,6-diaminopimelate (DAP), an intermediate involved in the bacterial biosynthesis of lysine and meso-diaminopimelic acid, an essential component of bacterial cell walls. The polypeptide is Succinyl-diaminopimelate desuccinylase (Acinetobacter baumannii (strain ATCC 17978 / DSM 105126 / CIP 53.77 / LMG 1025 / NCDC KC755 / 5377)).